The following is a 492-amino-acid chain: Ribose import ATP-binding protein RbsA (492 aa).

ABC transporter domains follow at residues 3–239 (IEMK…VGRS) and 249–492 (AEIR…TGGK). 35–42 (GENGAGKS) is an ATP binding site.

It belongs to the ABC transporter superfamily. Ribose importer (TC 3.A.1.2.1) family. As to quaternary structure, the complex is composed of an ATP-binding protein (RbsA), two transmembrane proteins (RbsC) and a solute-binding protein (RbsB).

It localises to the cell membrane. The enzyme catalyses D-ribose(out) + ATP + H2O = D-ribose(in) + ADP + phosphate + H(+). Functionally, part of the ABC transporter complex RbsABC involved in ribose import. Responsible for energy coupling to the transport system. The chain is Ribose import ATP-binding protein RbsA from Lactococcus lactis subsp. cremoris (strain SK11).